A 789-amino-acid chain; its full sequence is Ent-kaur-16-ene synthase, chloroplastic (789 aa).

Residues aspartate 536, aspartate 540, asparagine 680, serine 684, and glutamate 688 each contribute to the Mg(2+) site. A DDXXD motif motif is present at residues 536–540 (DDFYD).

The protein belongs to the terpene synthase family. Mg(2+) serves as cofactor. In terms of processing, the N-terminus is blocked. Abundant in most tissues. Present in low amounts in mature cotyledons.

The protein localises to the plastid. Its subcellular location is the chloroplast. It carries out the reaction ent-copalyl diphosphate = ent-kaur-16-ene + diphosphate. The protein operates within plant hormone biosynthesis; gibberellin biosynthesis. In terms of biological role, catalyzes the conversion of ent-copalyl diphosphate to the gibberellin precursor ent-kaur-16-ene. The sequence is that of Ent-kaur-16-ene synthase, chloroplastic from Cucurbita maxima (Pumpkin).